A 335-amino-acid chain; its full sequence is Coiled-coil domain-containing protein 68 (335 aa).

The stretch at Q101–T305 forms a coiled coil.

As to quaternary structure, interacts with CEP170. As to expression, expressed in bone marrow, colon, small intestine, spleen, testis, trachea and cutaneous T-cell lymphoma (CTCL).

Its subcellular location is the cytoplasm. The protein resides in the cytoskeleton. The protein localises to the microtubule organizing center. It localises to the centrosome. It is found in the centriole. Centriolar protein required for centriole subdistal appendage assembly and microtubule anchoring in interphase cells. Together with CCDC120, cooperate with subdistal appendage components ODF2, NIN and CEP170 for hierarchical subdistal appendage assembly. The sequence is that of Coiled-coil domain-containing protein 68 (CCDC68) from Homo sapiens (Human).